The following is a 74-amino-acid chain: Large ribosomal subunit protein bL31 (74 aa).

Positions 16, 18, 38, and 41 each coordinate Zn(2+).

Belongs to the bacterial ribosomal protein bL31 family. Type A subfamily. In terms of assembly, part of the 50S ribosomal subunit. Zn(2+) is required as a cofactor.

Its function is as follows. Binds the 23S rRNA. The sequence is that of Large ribosomal subunit protein bL31 from Acinetobacter baylyi (strain ATCC 33305 / BD413 / ADP1).